A 397-amino-acid polypeptide reads, in one-letter code: Potassium channel subfamily K member 4 (397 aa).

Topologically, residues 1–3 are cytoplasmic; the sequence is MRS. A helical membrane pass occupies residues 4-24; it reads TTLLALLALVLLYLVSGALVF. Residues 25–88 lie on the Extracellular side of the membrane; that stretch reads QALEQPHEQQ…WTNSSNHSSA (64 aa). Asparagine 81 is a glycosylation site (N-linked (GlcNAc...) asparagine). An intramembrane region (helical) is located at residues 89-103; that stretch reads WNLGSAFFFSGTIIT. Residues threonine 104, isoleucine 105, glycine 106, and tyrosine 107 each coordinate K(+). Positions 104-109 are selectivity filter 1; the sequence is TIGYGN. The stretch at 104 to 110 is an intramembrane region; the sequence is TIGYGNI. Residues 111-118 are Extracellular-facing; that stretch reads ALHTDAGR. Residues 119–151 form a helical membrane-spanning segment; that stretch reads LFCIFYALVGIPLFGMLLAGVGDRLGSSLRRGI. The Cytoplasmic segment spans residues 152–173; it reads GHIEAVFLKWHVPPGLVRMLSA. Residues 174-195 form a helical membrane-spanning segment; that stretch reads VLFLLIGCLLFVLTPTFVFSYM. Residues 196–200 are Extracellular-facing; the sequence is ESWSK. The segment at residues 201–214 is an intramembrane region (helical); sequence LEAIYFVIVTLTTV. Positions 213, 214, 215, and 216 each coordinate K(+). Residues 213–218 are selectivity filter 2; it reads TVGFGD. The stretch at 215–220 is an intramembrane region; that stretch reads GFGDYV. Residues 221 to 234 are Extracellular-facing; the sequence is PGDGTGQNSPAYQP. Residues 235 to 261 form a helical membrane-spanning segment; it reads LVWFWILFGLAYFASVLTTIGNWLRAV. The Cytoplasmic segment spans residues 262–397; the sequence is SRRTRAEMGG…GRLRDKAVPV (136 aa). Polar residues predominate over residues 282 to 292; the sequence is TVTARVTQRTG. The segment at 282–397 is disordered; that stretch reads TVTARVTQRT…GRLRDKAVPV (116 aa). Residues 369–388 are compositionally biased toward basic residues; that stretch reads PRGRRRPNPTKKPSRPRGPG.

It belongs to the two pore domain potassium channel (TC 1.A.1.8) family. In terms of assembly, homodimer; disulfide-linked. Forms heterodimers with other 2-pore domain K(+) channel subunits, such as KCNK2 and KCNK10. In terms of tissue distribution, detected in brain, and at much lower levels in liver, skeletal muscle and testis.

The protein resides in the cell membrane. Its subcellular location is the cell projection. It is found in the axon. The enzyme catalyses K(+)(in) = K(+)(out). It catalyses the reaction Rb(+)(in) = Rb(+)(out). The catalysed reaction is Cs(+)(in) = Cs(+)(out). Its activity is regulated as follows. Activated by various stimuli including intracellular basic pH, mechanical stretch and heat and polyunsaturated fatty acids such as arachidonic acid. In terms of biological role, k(+) channel that conducts voltage-dependent outward rectifying currents upon membrane depolarization. Voltage sensing is coupled to K(+) electrochemical gradient in an 'ion flux gating' mode where outward but not inward ion flow opens the gate. Converts to voltage-independent 'leak' conductance mode upon stimulation by various stimuli including mechanical membrane stretch, basic pH, heat and lipids. Homo- and heterodimerizes to form functional channels with distinct regulatory and gating properties. At trigeminal A-beta afferent nerves, the heterodimer of KCNK2/TREK-1 and KCNK4/TRAAK is mostly coexpressed at nodes of Ranvier where it conducts voltage-independent mechanosensitive and thermosensitive currents, allowing rapid action potential repolarization, high speed and high frequence saltatory conduction on myelinated nerves to ensure prompt sensory responses. Permeable to other monovalent cations such as Rb(+) and Cs(+). The polypeptide is Potassium channel subfamily K member 4 (Rattus norvegicus (Rat)).